The chain runs to 463 residues: Tryptophan aminotransferase-related protein 4 (463 aa).

The helical transmembrane segment at 6-26 (LLLIVSIILNLVFTIHILYYS) threads the bilayer. Residues tyrosine 124, 163 to 164 (TT), asparagine 239, 259 to 262 (DYAY), 282 to 285 (SLSK), and arginine 293 each bind pyridoxal 5'-phosphate. Lysine 285 is modified (N6-(pyridoxal phosphate)lysine).

This sequence belongs to the alliinase family. Pyridoxal 5'-phosphate serves as cofactor.

Its subcellular location is the membrane. In terms of biological role, probable aminotransferase. In Arabidopsis thaliana (Mouse-ear cress), this protein is Tryptophan aminotransferase-related protein 4 (TAR4).